A 176-amino-acid chain; its full sequence is NAD(P)H-quinone oxidoreductase subunit J (176 aa).

The span at 1-10 shows a compositional bias: polar residues; sequence MSETPTSPNQ. The tract at residues 1–22 is disordered; sequence MSETPTSPNQDLPEAPQAGPLS.

The protein belongs to the complex I 30 kDa subunit family. NDH-1 can be composed of about 15 different subunits; different subcomplexes with different compositions have been identified which probably have different functions.

Its subcellular location is the cellular thylakoid membrane. It catalyses the reaction a plastoquinone + NADH + (n+1) H(+)(in) = a plastoquinol + NAD(+) + n H(+)(out). It carries out the reaction a plastoquinone + NADPH + (n+1) H(+)(in) = a plastoquinol + NADP(+) + n H(+)(out). NDH-1 shuttles electrons from an unknown electron donor, via FMN and iron-sulfur (Fe-S) centers, to quinones in the respiratory and/or the photosynthetic chain. The immediate electron acceptor for the enzyme in this species is believed to be plastoquinone. Couples the redox reaction to proton translocation, and thus conserves the redox energy in a proton gradient. Cyanobacterial NDH-1 also plays a role in inorganic carbon-concentration. The sequence is that of NAD(P)H-quinone oxidoreductase subunit J from Synechococcus sp. (strain RCC307).